Here is a 192-residue protein sequence, read N- to C-terminus: Imidazole glycerol phosphate synthase subunit HisH (192 aa).

Positions 1 to 192 constitute a Glutamine amidotransferase type-1 domain; the sequence is MIVIVDYGLG…QAIQGGFIND (192 aa). The active-site Nucleophile is C77. Residues H169 and E171 contribute to the active site.

Heterodimer of HisH and HisF.

The protein resides in the cytoplasm. It catalyses the reaction 5-[(5-phospho-1-deoxy-D-ribulos-1-ylimino)methylamino]-1-(5-phospho-beta-D-ribosyl)imidazole-4-carboxamide + L-glutamine = D-erythro-1-(imidazol-4-yl)glycerol 3-phosphate + 5-amino-1-(5-phospho-beta-D-ribosyl)imidazole-4-carboxamide + L-glutamate + H(+). It carries out the reaction L-glutamine + H2O = L-glutamate + NH4(+). It participates in amino-acid biosynthesis; L-histidine biosynthesis; L-histidine from 5-phospho-alpha-D-ribose 1-diphosphate: step 5/9. IGPS catalyzes the conversion of PRFAR and glutamine to IGP, AICAR and glutamate. The HisH subunit catalyzes the hydrolysis of glutamine to glutamate and ammonia as part of the synthesis of IGP and AICAR. The resulting ammonia molecule is channeled to the active site of HisF. The sequence is that of Imidazole glycerol phosphate synthase subunit HisH from Staphylococcus aureus (strain COL).